The primary structure comprises 186 residues: Tegument protein UL55 (186 aa).

It belongs to the alphaherpesvirinae HHV-1 UL55 family.

The protein localises to the virion tegument. It is found in the host nucleus matrix. The polypeptide is Tegument protein UL55 (Human herpesvirus 2 (strain HG52) (HHV-2)).